A 244-amino-acid polypeptide reads, in one-letter code: Phosphoadenosine 5'-phosphosulfate reductase (244 aa).

C239 (nucleophile; cysteine thiosulfonate intermediate) is an active-site residue.

This sequence belongs to the PAPS reductase family. CysH subfamily.

The protein resides in the cytoplasm. It catalyses the reaction [thioredoxin]-disulfide + sulfite + adenosine 3',5'-bisphosphate + 2 H(+) = [thioredoxin]-dithiol + 3'-phosphoadenylyl sulfate. The protein operates within sulfur metabolism; hydrogen sulfide biosynthesis; sulfite from sulfate: step 3/3. Catalyzes the formation of sulfite from phosphoadenosine 5'-phosphosulfate (PAPS) using thioredoxin as an electron donor. The sequence is that of Phosphoadenosine 5'-phosphosulfate reductase from Shigella flexneri.